We begin with the raw amino-acid sequence, 450 residues long: Divalent metal cation transporter MntH (450 aa).

Transmembrane regions (helical) follow at residues 34 to 54, 61 to 81, 108 to 128, 141 to 161, 170 to 190, 212 to 232, 263 to 283, 305 to 325, 361 to 381, 383 to 403, and 422 to 442; these read LSFL…GNWI, AQYG…AMLL, IAII…IAEV, IPLI…LFIM, AIVG…VYIS, GILY…NLYL, IQLS…ASLF, PVLG…ALLA, SLAV…AAKI, QLLV…LIPL, and VNII…YLIV.

The protein belongs to the NRAMP family.

Its subcellular location is the cell membrane. In terms of biological role, h(+)-stimulated, divalent metal cation uptake system. This is Divalent metal cation transporter MntH from Staphylococcus aureus (strain Mu3 / ATCC 700698).